The following is a 41-amino-acid chain: uncharacterized protein (41 aa).

A disordered region spans residues 1-41 (MGKKHRNRITGQKKNNHIPEKDIIAAEEAHGKEYSAAKRKP). The segment covering 17–41 (HIPEKDIIAAEEAHGKEYSAAKRKP) has biased composition (basic and acidic residues).

This is an uncharacterized protein from Bacillus subtilis (strain 168).